A 78-amino-acid polypeptide reads, in one-letter code: MKVTDHILVPKHEIVPKEEVEEILKRYNIKIQQLPKIYEDDPVIQEIGAKEGDVVRVIRKSPTAGVSIAYRLVIKRII.

This sequence belongs to the archaeal Rpo5/eukaryotic RPB5 RNA polymerase subunit family. Part of the RNA polymerase complex.

The protein localises to the cytoplasm. The enzyme catalyses RNA(n) + a ribonucleoside 5'-triphosphate = RNA(n+1) + diphosphate. Functionally, DNA-dependent RNA polymerase (RNAP) catalyzes the transcription of DNA into RNA using the four ribonucleoside triphosphates as substrates. In Methanocaldococcus jannaschii (strain ATCC 43067 / DSM 2661 / JAL-1 / JCM 10045 / NBRC 100440) (Methanococcus jannaschii), this protein is DNA-directed RNA polymerase subunit Rpo5.